The chain runs to 431 residues: Histidinol dehydrogenase (431 aa).

Residues Y130, Q192, and N215 each coordinate NAD(+). Substrate is bound by residues S238, Q260, and H263. Zn(2+) is bound by residues Q260 and H263. Active-site proton acceptor residues include E328 and H329. Substrate is bound by residues H329, D362, E416, and H421. Zn(2+) is bound at residue D362. H421 contributes to the Zn(2+) binding site.

The protein belongs to the histidinol dehydrogenase family. It depends on Zn(2+) as a cofactor.

The enzyme catalyses L-histidinol + 2 NAD(+) + H2O = L-histidine + 2 NADH + 3 H(+). It functions in the pathway amino-acid biosynthesis; L-histidine biosynthesis; L-histidine from 5-phospho-alpha-D-ribose 1-diphosphate: step 9/9. Catalyzes the sequential NAD-dependent oxidations of L-histidinol to L-histidinaldehyde and then to L-histidine. This chain is Histidinol dehydrogenase, found in Thermosynechococcus vestitus (strain NIES-2133 / IAM M-273 / BP-1).